Reading from the N-terminus, the 149-residue chain is UPF0208 membrane protein VSAL_I2111 (149 aa).

2 helical membrane passes run 41–61 (FAVKVMPAVAVISVLTQMVFN) and 69–89 (SIIIALFAISMPLQGFWWLGN).

This sequence belongs to the UPF0208 family.

It is found in the cell inner membrane. The sequence is that of UPF0208 membrane protein VSAL_I2111 from Aliivibrio salmonicida (strain LFI1238) (Vibrio salmonicida (strain LFI1238)).